The following is an 83-amino-acid chain: Small ribosomal subunit protein uS17 (83 aa).

It belongs to the universal ribosomal protein uS17 family. In terms of assembly, part of the 30S ribosomal subunit.

One of the primary rRNA binding proteins, it binds specifically to the 5'-end of 16S ribosomal RNA. In Ehrlichia chaffeensis (strain ATCC CRL-10679 / Arkansas), this protein is Small ribosomal subunit protein uS17.